Here is a 425-residue protein sequence, read N- to C-terminus: Transmembrane protein 184A (425 aa).

The next 7 membrane-spanning stretches (helical) occupy residues 51–71 (LFLTSALARGVSGVFVWTALL), 96–116 (LLFIVPIYAFDSWLSLLLLGG), 133–153 (FVIYSFLTLCFQYLGGESAIM), 189–209 (TLQFCIVKPVMALITIILQAF), 226–246 (VTLVYNASVSLALYALFLFYF), 261–281 (FLTIKAIIFLSFWQGMLLAIL), and 303–323 (LAAGYQNFLICVEMLFASLAL). The tract at residues 375-425 (QYTQQSTHEAPGPGQGGHPAPSTHPGPASGSGGGKKSRNIEKRMLIPSEDL) is disordered. Positions 392-402 (HPAPSTHPGPA) are enriched in low complexity.

It belongs to the TMEM184 family. As to expression, expressed in testis, pancreas, parotid salivary gland and mammary gland (at protein level).

Its subcellular location is the cell membrane. The protein resides in the cytoplasm. The protein localises to the perinuclear region. It is found in the cytoplasmic vesicle membrane. It localises to the early endosome membrane. Its subcellular location is the endosome. The protein resides in the cytoplasmic vesicle. The protein localises to the secretory vesicle membrane. Functionally, acts as a heparin receptor in vascular cells. May be involved in vesicle transport in exocrine cells and Sertoli cells. In Mus musculus (Mouse), this protein is Transmembrane protein 184A (Tmem184a).